Consider the following 256-residue polypeptide: Ribonuclease HII (256 aa).

Residues 72-256 (ALICGIDEVG…TFEPIKSLVN (185 aa)) enclose the RNase H type-2 domain. Residues D78, E79, and D170 each coordinate a divalent metal cation.

Belongs to the RNase HII family. Mn(2+) serves as cofactor. Requires Mg(2+) as cofactor.

It localises to the cytoplasm. The catalysed reaction is Endonucleolytic cleavage to 5'-phosphomonoester.. Functionally, endonuclease that specifically degrades the RNA of RNA-DNA hybrids. This is Ribonuclease HII from Staphylococcus saprophyticus subsp. saprophyticus (strain ATCC 15305 / DSM 20229 / NCIMB 8711 / NCTC 7292 / S-41).